A 490-amino-acid polypeptide reads, in one-letter code: Ribulose bisphosphate carboxylase large chain (490 aa).

The substrate site is built by asparagine 127 and threonine 177. The active-site Proton acceptor is lysine 179. Lysine 181 contacts substrate. Positions 205, 207, and 208 each coordinate Mg(2+). Lysine 205 is modified (N6-carboxylysine). The active-site Proton acceptor is histidine 297. Residues arginine 298, histidine 330, and serine 382 each coordinate substrate.

The protein belongs to the RuBisCO large chain family. Type I subfamily. As to quaternary structure, heterohexadecamer of 8 large chains and 8 small chains. It depends on Mg(2+) as a cofactor.

It is found in the plastid. The protein localises to the chloroplast. The enzyme catalyses 2 (2R)-3-phosphoglycerate + 2 H(+) = D-ribulose 1,5-bisphosphate + CO2 + H2O. The catalysed reaction is D-ribulose 1,5-bisphosphate + O2 = 2-phosphoglycolate + (2R)-3-phosphoglycerate + 2 H(+). Its function is as follows. RuBisCO catalyzes two reactions: the carboxylation of D-ribulose 1,5-bisphosphate, the primary event in carbon dioxide fixation, as well as the oxidative fragmentation of the pentose substrate in the photorespiration process. Both reactions occur simultaneously and in competition at the same active site. In Phaeodactylum tricornutum (strain CCAP 1055/1), this protein is Ribulose bisphosphate carboxylase large chain.